A 388-amino-acid polypeptide reads, in one-letter code: Succinate--CoA ligase [ADP-forming] subunit beta (388 aa).

The ATP-grasp domain occupies 9–244 (KEILRKFGVA…LDEEDPAEIE (236 aa)). Residues lysine 46, 53–55 (GRG), glutamate 99, alanine 102, and glutamate 107 contribute to the ATP site. Asparagine 199 and aspartate 213 together coordinate Mg(2+). Substrate is bound by residues asparagine 264 and 321 to 323 (GIM).

Belongs to the succinate/malate CoA ligase beta subunit family. Heterotetramer of two alpha and two beta subunits. Mg(2+) serves as cofactor.

It catalyses the reaction succinate + ATP + CoA = succinyl-CoA + ADP + phosphate. It carries out the reaction GTP + succinate + CoA = succinyl-CoA + GDP + phosphate. The protein operates within carbohydrate metabolism; tricarboxylic acid cycle; succinate from succinyl-CoA (ligase route): step 1/1. Its function is as follows. Succinyl-CoA synthetase functions in the citric acid cycle (TCA), coupling the hydrolysis of succinyl-CoA to the synthesis of either ATP or GTP and thus represents the only step of substrate-level phosphorylation in the TCA. The beta subunit provides nucleotide specificity of the enzyme and binds the substrate succinate, while the binding sites for coenzyme A and phosphate are found in the alpha subunit. The protein is Succinate--CoA ligase [ADP-forming] subunit beta of Burkholderia cenocepacia (strain HI2424).